Reading from the N-terminus, the 123-residue chain is ATP synthase epsilon chain (123 aa).

This sequence belongs to the ATPase epsilon chain family. In terms of assembly, F-type ATPases have 2 components, CF(1) - the catalytic core - and CF(0) - the membrane proton channel. CF(1) has five subunits: alpha(3), beta(3), gamma(1), delta(1), epsilon(1). CF(0) has three main subunits: a, b and c.

The protein localises to the cell inner membrane. Its function is as follows. Produces ATP from ADP in the presence of a proton gradient across the membrane. The polypeptide is ATP synthase epsilon chain (Helicobacter pylori (strain P12)).